The sequence spans 195 residues: dCTP deaminase (195 aa).

DCTP-binding positions include 110-115, D128, 136-138, Y171, K178, and Q182; these read RSSLAR and VLE. E138 functions as the Proton donor/acceptor in the catalytic mechanism. The span at 169 to 179 shows a compositional bias: basic and acidic residues; that stretch reads RPYSSRKDAKY. Positions 169–195 are disordered; sequence RPYSSRKDAKYKNQQSAVASRIDEDKE.

Belongs to the dCTP deaminase family. Homotrimer.

It catalyses the reaction dCTP + H2O + H(+) = dUTP + NH4(+). It participates in pyrimidine metabolism; dUMP biosynthesis; dUMP from dCTP (dUTP route): step 1/2. Functionally, catalyzes the deamination of dCTP to dUTP. This is dCTP deaminase from Haemophilus influenzae (strain 86-028NP).